A 192-amino-acid chain; its full sequence is Xanthine phosphoribosyltransferase 2 (192 aa).

Leu-20 and Asn-27 together coordinate xanthine. 131–135 (ANACA) is a binding site for 5-phospho-alpha-D-ribose 1-diphosphate. Lys-159 provides a ligand contact to xanthine.

Belongs to the purine/pyrimidine phosphoribosyltransferase family. Xpt subfamily. As to quaternary structure, homodimer.

Its subcellular location is the cytoplasm. The enzyme catalyses XMP + diphosphate = xanthine + 5-phospho-alpha-D-ribose 1-diphosphate. It functions in the pathway purine metabolism; XMP biosynthesis via salvage pathway; XMP from xanthine: step 1/1. Converts the preformed base xanthine, a product of nucleic acid breakdown, to xanthosine 5'-monophosphate (XMP), so it can be reused for RNA or DNA synthesis. The polypeptide is Xanthine phosphoribosyltransferase 2 (Clostridium perfringens (strain ATCC 13124 / DSM 756 / JCM 1290 / NCIMB 6125 / NCTC 8237 / Type A)).